Reading from the N-terminus, the 317-residue chain is MNPNYLDFEQPIADLEAKIEELRMVGNDTDINITDEISRLKKKSISLTESIFSDLKSWDIARLARHPRRPYTQDYIDLIFEDFDELHGDRRYADDLSIIGGTARLDNTPVMIIGHQKGREVRDKVKRNFGMPRPEGYRKALRLMEMAERFKMPILTFIDTPGAYPGIGAEERGQSEAIAFNLAVMSRLKTPIISTVIGEGGSGGALAIGVCDQLNMLQYSTYAVISPEGCASILWKSAEYAAQAAEAMGVTADRLKELGVADHVIDEPLGGAHRNPEKMAETLKTSLAQGVAELSRLPLDELVSRRYERLTRYDGGR.

The CoA carboxyltransferase C-terminal domain maps to 39-293 (RLKKKSISLT…KTSLAQGVAE (255 aa)).

This sequence belongs to the AccA family. Acetyl-CoA carboxylase is a heterohexamer composed of biotin carboxyl carrier protein (AccB), biotin carboxylase (AccC) and two subunits each of ACCase subunit alpha (AccA) and ACCase subunit beta (AccD).

Its subcellular location is the cytoplasm. It carries out the reaction N(6)-carboxybiotinyl-L-lysyl-[protein] + acetyl-CoA = N(6)-biotinyl-L-lysyl-[protein] + malonyl-CoA. Its pathway is lipid metabolism; malonyl-CoA biosynthesis; malonyl-CoA from acetyl-CoA: step 1/1. In terms of biological role, component of the acetyl coenzyme A carboxylase (ACC) complex. First, biotin carboxylase catalyzes the carboxylation of biotin on its carrier protein (BCCP) and then the CO(2) group is transferred by the carboxyltransferase to acetyl-CoA to form malonyl-CoA. The sequence is that of Acetyl-coenzyme A carboxylase carboxyl transferase subunit alpha from Marinobacter nauticus (strain ATCC 700491 / DSM 11845 / VT8) (Marinobacter aquaeolei).